The sequence spans 118 residues: Heavy metal-associated isoprenylated plant protein 47 (118 aa).

The 67-residue stretch at 1 to 67 (MRIKLSVNSE…KACHVTLETL (67 aa)) folds into the HMA domain. Cysteine methyl ester is present on Cys115. The S-farnesyl cysteine moiety is linked to residue Cys115. Residues 116 to 118 (LVM) constitute a propeptide, removed in mature form.

This sequence belongs to the HIPP family.

In terms of biological role, heavy-metal-binding protein. This chain is Heavy metal-associated isoprenylated plant protein 47, found in Arabidopsis thaliana (Mouse-ear cress).